Consider the following 359-residue polypeptide: Mitochondrial glutathione transporter SLC25A39 (359 aa).

Topologically, residues 1–14 (MADQDPAGISPLQQ) are mitochondrial intermembrane. Solcar repeat units follow at residues 9–151 (ISPL…LKAF), 159–243 (SDLY…VKSW), and 253–347 (TSVG…GKSF). Residues 15–35 (MVASGTGAVVTSLFMTPLDVV) form a helical membrane-spanning segment. The Mitochondrial matrix portion of the chain corresponds to 36–121 (KVRLQSQRPS…VKIVRHEGTR (86 aa)). 4 residues coordinate [2Fe-2S] cluster: Cys74, Cys78, Cys88, and Cys94. Residues 122-142 (TLWSGLPATLVMTVPATAIYF) traverse the membrane as a helical segment. The Mitochondrial intermembrane portion of the chain corresponds to 143–160 (TAYDQLKAFLCGRALTSD). Residues 161–181 (LYAPMVAGALARLGTVTVISP) form a helical membrane-spanning segment. Over 182 to 214 (LELMRTKLQAQHVSYRELGACVRTAVAQGGWRS) the chain is Mitochondrial matrix. The chain crosses the membrane as a helical span at residues 215–235 (LWLGWGPTALRDVPFSALYWF). The Mitochondrial intermembrane portion of the chain corresponds to 236-258 (NYELVKSWLNGFRPKDQTSVGMS). The chain crosses the membrane as a helical span at residues 259–279 (FVAGGISGTVAAVLTLPFDVV). The Mitochondrial matrix segment spans residues 280-317 (KTQRQVALGAMEAVRVNPLHVDSTWLLLRRIRAESGTK). The helical transmembrane segment at 318–338 (GLFAGFLPRIIKAAPSCAIMI) threads the bilayer. Residues 339–359 (STYEFGKSFFQRLNQDRLLGG) lie on the Mitochondrial intermembrane side of the membrane.

It belongs to the mitochondrial carrier (TC 2.A.29) family. Cleaved and degraded by AFG3L2; degradation by AFG3L2 is regulated by the ability of SLC25A39 to bind iron-sulfur. In absence of mitochondrial glutathione, SLC25A39 binds iron-sulfur, preventing cleavage and degradation by AFG3L2. The presence of mitochondrial glutathione prevents iron-sulfur-binding to SLC25A39, promoting cleavage and degradation by AFG3L2. As to expression, expressed in many tissues. Abundant in testis and kidney.

The protein localises to the mitochondrion inner membrane. It catalyses the reaction glutathione(in) = glutathione(out). With respect to regulation, the activity of SLC25A39 is regulated by levels of mitochondrial glutathione via its ability to bind [2Fe-2S] iron-sulfur cluster. Upon physiological levels of mitochondrial glutathione, glutathione prevents iron-sulfur-binding to SLC25A39 promoting cleavage and degradation by AFG3L2. Upon depletion of mitochondrial glutathione, SLC25A39 binds iron-sulfur, preventing cleavage and degradation by AFG3L2. Mitochondrial transporter required for glutathione import into mitochondria. Glutathione, which plays key roles in oxidative metabolism, is produced exclusively in the cytosol and is imported in many organelles. Mitochondrial glutathione is required for the activity and stability of proteins containing iron-sulfur clusters, as well as erythropoiesis. The chain is Mitochondrial glutathione transporter SLC25A39 from Homo sapiens (Human).